Reading from the N-terminus, the 662-residue chain is Tubulin--tyrosine ligase-like protein 12 (662 aa).

Positions 324-660 (LKKRKIKVYA…LDEIDPTKVT (337 aa)) constitute a TTL domain. Residues 472–475 (CEYI), K491, and D493 contribute to the ATP site.

It belongs to the tubulin--tyrosine ligase family.

Its function is as follows. Regulates microtubule dynamics in uterine muscle cells. The sequence is that of Tubulin--tyrosine ligase-like protein 12 from Caenorhabditis elegans.